The chain runs to 100 residues: Urease subunit gamma (100 aa).

Belongs to the urease gamma subunit family. As to quaternary structure, heterotrimer of UreA (gamma), UreB (beta) and UreC (alpha) subunits. Three heterotrimers associate to form the active enzyme.

Its subcellular location is the cytoplasm. The enzyme catalyses urea + 2 H2O + H(+) = hydrogencarbonate + 2 NH4(+). Its pathway is nitrogen metabolism; urea degradation; CO(2) and NH(3) from urea (urease route): step 1/1. Its function is as follows. Expression of the urease operon increases the likelihood of bacterial survival by contributing to acid resistance in vitro and in vivo in BALB/c mice. Y.enterocolitica enters the body via an oral path and must survive the acidic stomach before being able to colonize the intestinal mucosa. The polypeptide is Urease subunit gamma (Yersinia enterocolitica).